We begin with the raw amino-acid sequence, 513 residues long: MSVELWQQCVELLRDELPAQQFNTWIRPLQVEAEGDELRVYAPNRFVLDWVNEKYLGRVLELLDEHGNGMAPVLSLLIGSKRSSAPRAAPNAPLAAAASQALQAAAANAAPAAAPAPAPAPTSAPAKKAAAQKAAEVSEEPSRDSFDPMAGASSQQAPVRAEQRTVQVEGALKHTSYLNRTFTFENFVEGKSNQLARAAAWQVADNPKHGYNPLFLYGGVGLGKTHLMHAVGNHLLKKNPNAKVVYLHSERFVADMVKALQLNAINEFKRFYRSVDALLIDDIQFFARKERSQEEFFHTFNALLEGGQQVILTSDRYPKEIEGLEERLKSRFGWGLTVAVEPPELETRVAILMKKADQAKVELPHDAAFFIAQRIRSNVRELEGALKRVIAHSHFMGRDITIELIRESLKDLLALQDKLVSVDNIQRTVAEYYKIKISDLLSKRRSRSVARPRQVAMALSKELTNHSLPEIGDVFGGRDHTTVLHACRKINELKESDADIREDYKNLLRTLTT.

The domain I, interacts with DnaA modulators stretch occupies residues 1–87 (MSVELWQQCV…IGSKRSSAPR (87 aa)). Positions 87–176 (RAAPNAPLAA…QVEGALKHTS (90 aa)) are domain II. The disordered stretch occupies residues 113–163 (AAPAPAPAPTSAPAKKAAAQKAAEVSEEPSRDSFDPMAGASSQQAPVRAEQ). The segment covering 123–135 (SAPAKKAAAQKAA) has biased composition (low complexity). The domain III, AAA+ region stretch occupies residues 177–393 (YLNRTFTFEN…GALKRVIAHS (217 aa)). The ATP site is built by glycine 221, glycine 223, lysine 224, and threonine 225. Residues 394–513 (HFMGRDITIE…YKNLLRTLTT (120 aa)) form a domain IV, binds dsDNA region.

This sequence belongs to the DnaA family. As to quaternary structure, oligomerizes as a right-handed, spiral filament on DNA at oriC.

The protein resides in the cytoplasm. Functionally, plays an essential role in the initiation and regulation of chromosomal replication. ATP-DnaA binds to the origin of replication (oriC) to initiate formation of the DNA replication initiation complex once per cell cycle. Binds the DnaA box (a 9 base pair repeat at the origin) and separates the double-stranded (ds)DNA. Forms a right-handed helical filament on oriC DNA; dsDNA binds to the exterior of the filament while single-stranded (ss)DNA is stabiized in the filament's interior. The ATP-DnaA-oriC complex binds and stabilizes one strand of the AT-rich DNA unwinding element (DUE), permitting loading of DNA polymerase. After initiation quickly degrades to an ADP-DnaA complex that is not apt for DNA replication. Binds acidic phospholipids. This is Chromosomal replication initiator protein DnaA from Pseudomonas fluorescens (strain ATCC BAA-477 / NRRL B-23932 / Pf-5).